The primary structure comprises 274 residues: SNLKGAANAEAGSEKLKEKQQEAAVELDELKKRREERRKILEEEEQKKKQEEAERKIREEEEKKRMKEEIERRRAEAAEKRQKMPEDGVSEEKKPFKCFSPKGSSLKIEERAEFLNKSAQKSGMKPAHTTAVVSKIDSRLEQYTSAVVGNKAAKPAKPAASDLPVPAEGVRNIKSMWEKGNVFSSPGGTGTPNKETAGLKVGVSSRINEWLTKTPEGNKSPAPKPSDLRPGDVSGKRNLWEKQSVEKPAASSSKVTATGKKSETDGLRQFEKEP.

2 disordered regions span residues 1-102 (SNLK…FSPK) and 179-274 (KGNV…EKEP). Composition is skewed to basic and acidic residues over residues 12-21 (GSEKLKEKQQ) and 28-95 (DELK…EKKP). Over residues 182–194 (VFSSPGGTGTPNK) the composition is skewed to polar residues. Basic and acidic residues-rich tracts occupy residues 226–245 (SDLR…KQSV) and 260–274 (KKSE…EKEP).

Its subcellular location is the cytoplasm. The protein localises to the cytoskeleton. The protein resides in the myofibril. It is found in the stress fiber. In terms of biological role, control of actomyosin interactions in smooth muscle and nonmuscle cells (could act as a bridge between myosin and actin filaments). Inhibits the actin-activated ATPase of myosin this inhibition is attenuated by calcium-calmodulin and is potentiated by tropomyosin. Interacts with actin, myosin, 2 molecules of tropomyosin and with calmodulin. The protein is Caldesmon, smooth muscle (CALD1) of Meleagris gallopavo (Wild turkey).